A 68-amino-acid chain; its full sequence is Conotoxin Lt5.2 (68 aa).

A signal peptide spans 1–19 (MLCLPVFIILLLLASPAAP). A propeptide spanning residues 20-54 (KSLETRIQNDLIRAGLTDADLKTEKGFLSGLLNVA) is cleaved from the precursor.

This sequence belongs to the conotoxin T superfamily. Post-translationally, contains 2 disulfide bonds that can be either 'C1-C3, C2-C4' or 'C1-C4, C2-C3', since these disulfide connectivities have been observed for conotoxins with cysteine framework V (for examples, see AC P0DQQ7 and AC P81755). Expressed by the venom duct.

The protein resides in the secreted. In Conus litteratus (Lettered cone), this protein is Conotoxin Lt5.2.